The primary structure comprises 393 residues: UDP-galactose translocator (393 aa).

10 helical membrane-spanning segments follow: residues 3–23 (AVGSGGSTATAGPGAVSAGAL), 37–57 (YISLAVLVVQNASLILSIRYA), 65–85 (FFATTAVVMAEVLKGLTCLLL), 97–117 (LVLFLHEAVLVQYMDTLKLAV), 140–160 (TFQVTYQLKILTTALFSVLML), 169–189 (WASLLLLFTGVAIVQAQQAGG), 200–220 (GVGLAAVVASCLSSGFAGVYF), 238–258 (LGLFGTALGLVGLWWAEGTAV), 269–289 (PAVWGVVLNQAFGGLLVAVVV), and 315–335 (LFGFHVDPLFALGAGLVIGAV). A disordered region spans residues 353–393 (APTSGPCTHQQPPGQPPPPQLSSHHGDLSTEPFLPKSVLVK).

It belongs to the nucleotide-sugar transporter family. SLC35A subfamily. As to quaternary structure, interacts with SLC35A3; the interaction is reduced in the presence of SLC35A4. Found in a complex with SLC35A3 and SLC35A4.

The protein resides in the golgi apparatus membrane. The catalysed reaction is UMP(out) + UDP-alpha-D-galactose(in) = UMP(in) + UDP-alpha-D-galactose(out). It carries out the reaction UDP-N-acetyl-alpha-D-galactosamine(in) + UMP(out) = UDP-N-acetyl-alpha-D-galactosamine(out) + UMP(in). The enzyme catalyses UMP(out) + UDP-alpha-D-glucose(in) = UMP(in) + UDP-alpha-D-glucose(out). It catalyses the reaction UMP(out) + UDP-N-acetyl-alpha-D-glucosamine(in) = UMP(in) + UDP-N-acetyl-alpha-D-glucosamine(out). The catalysed reaction is UDP-alpha-D-galactose(in) + AMP(out) = UDP-alpha-D-galactose(out) + AMP(in). It carries out the reaction UDP-alpha-D-galactose(in) + CMP(out) = UDP-alpha-D-galactose(out) + CMP(in). The enzyme catalyses UDP-N-acetyl-alpha-D-galactosamine(out) + UDP-alpha-D-galactose(in) = UDP-N-acetyl-alpha-D-galactosamine(in) + UDP-alpha-D-galactose(out). It catalyses the reaction UDP-N-acetyl-alpha-D-glucosamine(out) + UDP-alpha-D-galactose(in) = UDP-N-acetyl-alpha-D-glucosamine(in) + UDP-alpha-D-galactose(out). The catalysed reaction is UDP-alpha-D-galactose(in) + UDP-alpha-D-glucose(out) = UDP-alpha-D-galactose(out) + UDP-alpha-D-glucose(in). It carries out the reaction UMP(out) + CMP(in) = UMP(in) + CMP(out). The enzyme catalyses UMP(out) + AMP(in) = UMP(in) + AMP(out). In terms of biological role, transports uridine diphosphate galactose (UDP-galactose) from the cytosol into the Golgi apparatus, functioning as an antiporter that exchanges UDP-galactose for UMP. It is also able to exchange UDP-galactose for AMP and CMP, and to transport UDP-N-acetylgalactosamine (UDP-GalNAc) and other nucleotide sugars. As a provider of UDP-galactose to galactosyltransferases present in the Golgi apparatus, it is necessary for globotriaosylceramide/globoside (Gb3Cer) synthesis from lactosylceramide. In Bos taurus (Bovine), this protein is UDP-galactose translocator.